The chain runs to 258 residues: Global transcriptional regulator CodY (258 aa).

The GAF domain stretch occupies residues 1 to 156 (MSSLLSKTRR…SATIVGMEML (156 aa)). Residues 204–223 (ASKIADKVGITRSVIVNALR) constitute a DNA-binding region (H-T-H motif).

Belongs to the CodY family.

It is found in the cytoplasm. DNA-binding global transcriptional regulator which is involved in the adaptive response to starvation and acts by directly or indirectly controlling the expression of numerous genes in response to nutrient availability. During rapid exponential growth, CodY is highly active and represses genes whose products allow adaptation to nutrient depletion. This is Global transcriptional regulator CodY from Clostridium botulinum (strain Alaska E43 / Type E3).